The sequence spans 185 residues: Threonylcarbamoyl-AMP synthase (185 aa).

The region spanning 4 to 185 is the YrdC-like domain; sequence DWRVQQVARV…LRSGEVIRPA (182 aa).

Belongs to the SUA5 family. TsaC subfamily.

The protein localises to the cytoplasm. The enzyme catalyses L-threonine + hydrogencarbonate + ATP = L-threonylcarbamoyladenylate + diphosphate + H2O. Its function is as follows. Required for the formation of a threonylcarbamoyl group on adenosine at position 37 (t(6)A37) in tRNAs that read codons beginning with adenine. Catalyzes the conversion of L-threonine, HCO(3)(-)/CO(2) and ATP to give threonylcarbamoyl-AMP (TC-AMP) as the acyladenylate intermediate, with the release of diphosphate. The chain is Threonylcarbamoyl-AMP synthase from Stutzerimonas stutzeri (strain A1501) (Pseudomonas stutzeri).